Consider the following 525-residue polypeptide: MGDVSELKMQITPETPGRIPVLNPFESPSDYSNLHEQTLASPSIFKSTKLPTPGKFRWSIDQLAIINPVEIDPEEIHRQASYLRLSRIDKDVEDKRQKAIEEFFTKDVIVPSPWTDHDGKQPSELHPSKCLSSHDDSPDGKKPSLPSQKCNAACQTLLSLPVDFNLEAILGDYFREEDFVAHTPGNLSSSSLRRKLFLDGNGSICDPLPSPSPGSPPCSARGSLEGQFSSSPIQNSVKKYSLGSVTTSPSAISSPTFSPIALQGGKTPLSEPRKLTFHSPEASCATASTGIVNPSIRSPYIDGCSPIKNWSPRRLRGGPQCLSSLVRIPFTLEAHSEDEEADVSCTGAAPLSTNACGEPRVVTAMSVTQSHSGIAEKERAVLDDAESERENDTVDMVDPTDTVAESTWIKEPVDDGNSPMTDSASGIAFSIENSHMCMSPLAESSVLPYESSAIQMNSDYNTQTCVSNITDIVGTERYCKENVTHTNVPVPFEVEMKSQVNNVTPGHTAQRCWMKSPRPSQCSRP.

The interval 114–146 is disordered; sequence WTDHDGKQPSELHPSKCLSSHDDSPDGKKPSLP. Over residues 115–142 the composition is skewed to basic and acidic residues; that stretch reads TDHDGKQPSELHPSKCLSSHDDSPDGKK. Phosphoserine occurs at positions 191, 250, 305, and 311. Residue Arg316 is modified to Omega-N-methylarginine. Phosphothreonine is present on Thr331. A disordered region spans residues 505-525; sequence PGHTAQRCWMKSPRPSQCSRP.

This sequence belongs to the BORA family. In terms of assembly, interacts with AURKA. In terms of processing, phosphorylated by AURKA.

Functionally, required for the activation of AURKA at the onset of mitosis. The sequence is that of Protein aurora borealis (Bora) from Mus musculus (Mouse).